We begin with the raw amino-acid sequence, 282 residues long: MSNFSMETLKLLRQQTGVGLTKCKEALAECNGNLEEAVVHLRKLGLASASKKEHRETKEGVIAAKSDARGTAVVEVNVETDFVANNAVFRTFVDGLVEDVLNHKVNSVDALLPLTSSQDASLTIDELRAVTMQTVGENIRISRIKYLPKTTEESVGIYSHGNGKAVSVTVLSGVADKESLAKDISMHIVAAQPLFLNKESVPADALEREKEVISSQVQGKPQAVIDKIISGKLGTFFQDVCLLEQAFIKNPDITIQGLVDDASKTSGNSVEVKEFILWKIGA.

The involved in Mg(2+) ion dislocation from EF-Tu stretch occupies residues 80–83; it reads TDFV.

The protein belongs to the EF-Ts family.

The protein resides in the cytoplasm. In terms of biological role, associates with the EF-Tu.GDP complex and induces the exchange of GDP to GTP. It remains bound to the aminoacyl-tRNA.EF-Tu.GTP complex up to the GTP hydrolysis stage on the ribosome. In Chlamydia caviae (strain ATCC VR-813 / DSM 19441 / 03DC25 / GPIC) (Chlamydophila caviae), this protein is Elongation factor Ts.